Here is a 132-residue protein sequence, read N- to C-terminus: Small ribosomal subunit protein uS8 (132 aa).

This sequence belongs to the universal ribosomal protein uS8 family. Part of the 30S ribosomal subunit. Contacts proteins S5 and S12.

Its function is as follows. One of the primary rRNA binding proteins, it binds directly to 16S rRNA central domain where it helps coordinate assembly of the platform of the 30S subunit. The chain is Small ribosomal subunit protein uS8 from Aliarcobacter butzleri (strain RM4018) (Arcobacter butzleri).